The primary structure comprises 352 residues: Quinolinate synthase (352 aa).

Residues H48 and S69 each coordinate iminosuccinate. A [4Fe-4S] cluster-binding site is contributed by C114. Iminosuccinate-binding positions include Y140 to N142 and S157. Residue C201 participates in [4Fe-4S] cluster binding. Iminosuccinate contacts are provided by residues H227 to E229 and T244. C298 provides a ligand contact to [4Fe-4S] cluster.

This sequence belongs to the quinolinate synthase family. Type 1 subfamily. It depends on [4Fe-4S] cluster as a cofactor.

Its subcellular location is the cytoplasm. The catalysed reaction is iminosuccinate + dihydroxyacetone phosphate = quinolinate + phosphate + 2 H2O + H(+). It functions in the pathway cofactor biosynthesis; NAD(+) biosynthesis; quinolinate from iminoaspartate: step 1/1. In terms of biological role, catalyzes the condensation of iminoaspartate with dihydroxyacetone phosphate to form quinolinate. In Pseudomonas putida (strain ATCC 700007 / DSM 6899 / JCM 31910 / BCRC 17059 / LMG 24140 / F1), this protein is Quinolinate synthase.